The chain runs to 659 residues: Delta(6)-protoilludene synthase (659 aa).

Mg(2+) contacts are provided by aspartate 91, asparagine 227, serine 231, and glutamate 235. The short motif at 91-95 (DEHTD) is the DDXXD motif element. (2E,6E)-farnesyl diphosphate is bound by residues arginine 316 and tyrosine 317. The segment at 528–586 (PQFSKTSGAPNGAHTPTTTNGSIKSNGFVSGDTNGHANGNGHVQTRSSTPSSSSSSTSS) is disordered. The segment covering 530 to 573 (FSKTSGAPNGAHTPTTTNGSIKSNGFVSGDTNGHANGNGHVQTR) has biased composition (polar residues). Low complexity predominate over residues 574–586 (SSTPSSSSSSTSS).

It belongs to the terpene synthase family. The cofactor is Mg(2+).

It carries out the reaction (2E,6E)-farnesyl diphosphate = Delta(6)-protoilludene + diphosphate. In terms of biological role, terpene cyclase that catalyzes the cyclization of farnesyl diphosphate (FPP) to delta(6)-protoilludene. This is Delta(6)-protoilludene synthase from Cyclocybe aegerita (Black poplar mushroom).